The chain runs to 524 residues: Serine/threonine-protein phosphatase 2A 56 kDa regulatory subunit gamma isoform (524 aa).

N-acetylmethionine is present on Met1. The interval 476-508 is disordered; sequence SDEARQAQKELKKDRPLVRRKSELPQDPHTEKA.

The protein belongs to the phosphatase 2A regulatory subunit B56 family. In terms of assembly, PP2A consists of a common heterodimeric core enzyme, composed of PPP2CA a 36 kDa catalytic subunit (subunit C) and PPP2R1A a 65 kDa constant regulatory subunit (PR65 or subunit A), that associates with a variety of regulatory subunits. Proteins that associate with the core dimer include three families of regulatory subunits B (the R2/B/PR55/B55, R3/B''/PR72/PR130/PR59 and R5/B'/B56 families), the 48 kDa variable regulatory subunit, viral proteins, and cell signaling molecules. Interacts with SGO1. Interacts with SGO1; the interaction is direct. May interact with TP53. Interacts with IER3 and/or ERK kinases; regulates ERK dephosphorylation. Interacts with CIP2A; this interaction stabilizes CIP2A. As to expression, highest levels in heart, liver and brain. Lower levels in skeletal muscle, spleen, kidney and lung. Isoform 4 is testis-specific.

Its subcellular location is the nucleus. It is found in the chromosome. The protein localises to the centromere. Functionally, the B regulatory subunit might modulate substrate selectivity and catalytic activity, and might also direct the localization of the catalytic enzyme to a particular subcellular compartment. The PP2A-PPP2R5C holoenzyme may activate TP53 and play a role in DNA damage-induced inhibition of cell proliferation. PP2A-PPP2R5C may also regulate the ERK signaling pathway through ERK dephosphorylation. The chain is Serine/threonine-protein phosphatase 2A 56 kDa regulatory subunit gamma isoform (Ppp2r5c) from Mus musculus (Mouse).